Consider the following 288-residue polypeptide: ATP phosphoribosyltransferase (288 aa).

This sequence belongs to the ATP phosphoribosyltransferase family. Long subfamily. Mg(2+) serves as cofactor.

The protein resides in the cytoplasm. The enzyme catalyses 1-(5-phospho-beta-D-ribosyl)-ATP + diphosphate = 5-phospho-alpha-D-ribose 1-diphosphate + ATP. It functions in the pathway amino-acid biosynthesis; L-histidine biosynthesis; L-histidine from 5-phospho-alpha-D-ribose 1-diphosphate: step 1/9. With respect to regulation, feedback inhibited by histidine. Catalyzes the condensation of ATP and 5-phosphoribose 1-diphosphate to form N'-(5'-phosphoribosyl)-ATP (PR-ATP). Has a crucial role in the pathway because the rate of histidine biosynthesis seems to be controlled primarily by regulation of HisG enzymatic activity. The sequence is that of ATP phosphoribosyltransferase from Methanococcus maripaludis (strain C6 / ATCC BAA-1332).